A 177-amino-acid polypeptide reads, in one-letter code: Parathyroid hormone-related protein (177 aa).

The first 24 residues, 1 to 24 (MLWRLVQQWSVAVFLLSYSVPSCG), serve as a signal peptide directing secretion. A propeptide spanning residues 25 to 34 (RSVEELGRRL) is cleaved from the precursor. The important for receptor binding stretch occupies residues 57–68 (RFFLHHLIAEIH). The segment at 74–149 (ATSEVSPNSK…KRRTRSAWLT (76 aa)) is disordered. Polar residues predominate over residues 76–90 (SEVSPNSKPAPNTKN). Residues 108-129 (TNKVETYKEQPLKTPGKKKKSK) carry the Nuclear localization signal motif. Basic and acidic residues predominate over residues 109–118 (NKVETYKEQP). Residues 122-132 (PGKKKKSKPGK) are compositionally biased toward basic residues.

This sequence belongs to the parathyroid hormone family. PTHrP interacts with PTH1R (via N-terminal extracellular domain). There are several secretory forms, including osteostatin, arising from endoproteolytic cleavage of the initial translation product. Each of these secretory forms is believed to have one or more of its own receptors that mediates the normal paracrine, autocrine and endocrine actions.

Its subcellular location is the secreted. The protein resides in the cytoplasm. The protein localises to the nucleus. Neuroendocrine peptide which is a critical regulator of cellular and organ growth, development, migration, differentiation and survival and of epithelial calcium ion transport. Acts by binding to its receptor, PTH1R, activating G protein-coupled receptor signaling. Regulates endochondral bone development and epithelial-mesenchymal interactions during the formation of the mammary glands and teeth. Required for skeletal homeostasis. Promotes mammary mesenchyme differentiation and bud outgrowth by modulating mesenchymal cell responsiveness to BMPs. Up-regulates BMPR1A expression in the mammary mesenchyme and this increases the sensitivity of these cells to BMPs and allows them to respond to BMP4 in a paracrine and/or autocrine fashion. BMP4 signaling in the mesenchyme, in turn, triggers epithelial outgrowth and augments MSX2 expression, which causes the mammary mesenchyme to inhibit hair follicle formation within the nipple sheath. In terms of biological role, potent inhibitor of osteoclastic bone resorption. The polypeptide is Parathyroid hormone-related protein (PTHLH) (Bos taurus (Bovine)).